Consider the following 424-residue polypeptide: Glucan endo-1,3-alpha-glucosidase agn1 (424 aa).

The first 20 residues, 1–20 (MKLVLFLVLLFSALINLTNA), serve as a signal peptide directing secretion.

Belongs to the glycosyl hydrolase 71 family. Monomer. In terms of processing, not glycosylated.

The protein resides in the secreted. It is found in the cell wall. The enzyme catalyses Endohydrolysis of (1-&gt;3)-alpha-D-glucosidic linkages in isolichenin, pseudonigeran and nigeran.. Functionally, has a role in cell separation where it is required for the degradation of the cell wall material surrounding the septum (the septum edging) which must be hydrolyzed before full separation of the daughter cells can occur. Hydrolyzes 1,3-alpha-glucan predominantly into pentasaccharides. The polypeptide is Glucan endo-1,3-alpha-glucosidase agn1 (agn1) (Schizosaccharomyces pombe (strain 972 / ATCC 24843) (Fission yeast)).